The chain runs to 159 residues: 17.7 kDa class I heat shock protein (159 aa).

In terms of domain architecture, sHSP spans 45–159 (DAAAFAGARI…PDVKSIQISG (115 aa)).

It belongs to the small heat shock protein (HSP20) family. In terms of assembly, may form oligomeric structures.

It localises to the cytoplasm. The protein is 17.7 kDa class I heat shock protein (HSP17.7) of Oryza sativa subsp. japonica (Rice).